Reading from the N-terminus, the 406-residue chain is Argininosuccinate synthase (406 aa).

ATP-binding positions include 11 to 19 and A38; that span reads AYSGGLDTS. Residues Y91 and S96 each contribute to the L-citrulline site. G121 is an ATP binding site. Residues T123, N127, and D128 each coordinate L-aspartate. N127 is an L-citrulline binding site. R131, S181, S190, E266, and Y278 together coordinate L-citrulline.

It belongs to the argininosuccinate synthase family. Type 1 subfamily. Homotetramer.

It localises to the cytoplasm. It carries out the reaction L-citrulline + L-aspartate + ATP = 2-(N(omega)-L-arginino)succinate + AMP + diphosphate + H(+). It participates in amino-acid biosynthesis; L-arginine biosynthesis; L-arginine from L-ornithine and carbamoyl phosphate: step 2/3. This chain is Argininosuccinate synthase, found in Campylobacter lari (strain RM2100 / D67 / ATCC BAA-1060).